The following is a 462-amino-acid chain: MTEKKTWSDRFEGSLHPAIAYFNASIEFDIELIEYDLTGSIAHAKMLAHTGIISETEAQQLVTGLEQIRAEYREGQFNPGIDQEDVHFAVERRLTEIIGDVGKKLHTARSRNDQVGTDIRLYLRDQIDQIRGQIREFQQVLLDHAQNHVETLIPGYTHLQRAQPVSLAHHLLAYFHMAQRDWERLGEIRKRTNISPLGSGALAGTTFPIDRHYSAQLLQFEGVYPNSLDGVSDRDFAIEFLNAASLIMVHLSRLSEEMILWSSQEFSFITLTDSCATGSSIMPQKKNPDVPELIRGKTGRVFGHLQGLLVLMKGLPLAYNKDLQEDKEALFDGVKTVKGCLEAMTILLSEGIKFKTERLTQAVNEDFSNATDVADYLAARGVPFREAYNLVGKVVKTSLAAGKLLKDLTLDQWKELHPAFEADIYEAIAPSQVVAARNSYGGTGFKQVRQAILTAKTLLESN.

This sequence belongs to the lyase 1 family. Argininosuccinate lyase subfamily.

The protein localises to the cytoplasm. It carries out the reaction 2-(N(omega)-L-arginino)succinate = fumarate + L-arginine. Its pathway is amino-acid biosynthesis; L-arginine biosynthesis; L-arginine from L-ornithine and carbamoyl phosphate: step 3/3. The chain is Argininosuccinate lyase from Gloeothece citriformis (strain PCC 7424) (Cyanothece sp. (strain PCC 7424)).